We begin with the raw amino-acid sequence, 400 residues long: Centrosomal protein CEP57L1 (400 aa).

The residue at position 45 (Ser45) is a Phosphoserine. Coiled-coil stretches lie at residues 47-111 (NNQA…KKDI) and 138-213 (NVER…QDRA). 2 disordered regions span residues 222-261 (REPP…EPVS) and 314-400 (MESK…KWEQ). A compositionally biased stretch (polar residues) spans 244-258 (RTTSQARANPQSSGE). Residues 261 to 345 (SICDSLSELL…EKIENSRINE (85 aa)) adopt a coiled-coil conformation. Basic and acidic residues-rich tracts occupy residues 314–342 (MESK…ENSR) and 391–400 (LRRDDIKWEQ).

The protein belongs to the translokin family.

Its subcellular location is the cytoplasm. It is found in the cytoskeleton. The protein localises to the microtubule organizing center. It localises to the centrosome. Functionally, centrosomal protein which may be required for microtubule attachment to centrosomes. This chain is Centrosomal protein CEP57L1 (Cep57l1), found in Mus musculus (Mouse).